We begin with the raw amino-acid sequence, 256 residues long: Hemin import ATP-binding protein HmuV (256 aa).

Positions 2 to 238 constitute an ABC transporter domain; it reads ISAQNLVYSL…QALTMLYGAD (237 aa). Residue 34–41 participates in ATP binding; it reads GPNGAGKS.

The protein belongs to the ABC transporter superfamily. Heme (hemin) importer (TC 3.A.1.14.5) family. As to quaternary structure, the complex is composed of two ATP-binding proteins (HmuV), two transmembrane proteins (HmuU) and a solute-binding protein (HmuT).

It localises to the cell inner membrane. Functionally, part of the ABC transporter complex HmuTUV involved in hemin import. Responsible for energy coupling to the transport system. The protein is Hemin import ATP-binding protein HmuV of Escherichia coli O157:H7.